Here is a 239-residue protein sequence, read N- to C-terminus: Phosphoribosylaminoimidazole-succinocarboxamide synthase (239 aa).

The protein belongs to the SAICAR synthetase family.

It carries out the reaction 5-amino-1-(5-phospho-D-ribosyl)imidazole-4-carboxylate + L-aspartate + ATP = (2S)-2-[5-amino-1-(5-phospho-beta-D-ribosyl)imidazole-4-carboxamido]succinate + ADP + phosphate + 2 H(+). Its pathway is purine metabolism; IMP biosynthesis via de novo pathway; 5-amino-1-(5-phospho-D-ribosyl)imidazole-4-carboxamide from 5-amino-1-(5-phospho-D-ribosyl)imidazole-4-carboxylate: step 1/2. The sequence is that of Phosphoribosylaminoimidazole-succinocarboxamide synthase from Chlorobium luteolum (strain DSM 273 / BCRC 81028 / 2530) (Pelodictyon luteolum).